The chain runs to 205 residues: Small ribosomal subunit protein uS4 (205 aa).

The segment at 26–46 (PVNRREYGPGQHGQRRKQKPS) is disordered. In terms of domain architecture, S4 RNA-binding spans 94 to 157 (RRLDAVVYRL…KQLAIVLDAV (64 aa)).

Belongs to the universal ribosomal protein uS4 family. In terms of assembly, part of the 30S ribosomal subunit. Contacts protein S5. The interaction surface between S4 and S5 is involved in control of translational fidelity.

Functionally, one of the primary rRNA binding proteins, it binds directly to 16S rRNA where it nucleates assembly of the body of the 30S subunit. Its function is as follows. With S5 and S12 plays an important role in translational accuracy. In Gluconobacter oxydans (strain 621H) (Gluconobacter suboxydans), this protein is Small ribosomal subunit protein uS4.